The following is a 297-amino-acid chain: Inosose dehydratase (297 aa).

The protein belongs to the IolE/MocC family. Glutathione serves as cofactor. Co(2+) is required as a cofactor. The cofactor is Mn(2+).

The catalysed reaction is scyllo-inosose = 3D-3,5/4-trihydroxycyclohexane-1,2-dione + H2O. It participates in polyol metabolism; myo-inositol degradation into acetyl-CoA; acetyl-CoA from myo-inositol: step 2/7. In terms of biological role, catalyzes the dehydration of inosose (2-keto-myo-inositol, 2KMI or 2,4,6/3,5-pentahydroxycyclohexanone) to 3D-(3,5/4)-trihydroxycyclohexane-1,2-dione (D-2,3-diketo-4-deoxy-epi-inositol). This chain is Inosose dehydratase, found in Clostridium perfringens (strain 13 / Type A).